Consider the following 119-residue polypeptide: Large ribosomal subunit protein bL20 (119 aa).

This sequence belongs to the bacterial ribosomal protein bL20 family.

In terms of biological role, binds directly to 23S ribosomal RNA and is necessary for the in vitro assembly process of the 50S ribosomal subunit. It is not involved in the protein synthesizing functions of that subunit. The sequence is that of Large ribosomal subunit protein bL20 from Streptococcus uberis (strain ATCC BAA-854 / 0140J).